A 909-amino-acid polypeptide reads, in one-letter code: MVEEEFMNEFLKKTGYQVYKCKKCGERFWSLVPRDTCPDRPCSKYDFLYNEYKGVPPLTFDEARRKFIEFFTSHGHGYVDPYPVLARWRNDLYLTIASIIVFQPAVTEGIVDPPYNPLVIVQPSVRLEDIDNVGLTFGRHLTSFEMGGHHAFNKKDQYVYWVNETLQYAFDFFTKIIGIEPENIVFKESWWEGGGNAGPAYEVLVDGLELATLVFMKYKIVNGKKVRNPVLVVDTGYGIERIAWFTQRTPTAFHTIFSSLLETYKNILGIDEPPYDVLKKIVYLLSDKEIEDVYMLNKYLEEIDYSEYYKSLVDTINLYTALDHVKTLSLMLSDGIVSSNTGEGYLARLVIRRLLRTLIRLGIKVSTLEDIVLELIDKQAKYWKGRYVYDKFHRRLDYILDVMSYETRKYIDIVTRGIREVDRFIKKKKKITFDDLIQIYDSKGIPPEIVVERAKHYGQEIRVPSNFYSLIAARHGGSQALIKEKEHELPDEIVEWASKHDPTKKLFHENPYLRRASAKVLDSLNEYVIFDQTIFYPRAGGQDHDKGYVILGNEHIPVKHVYKVGEVIVHQLATKRRLVPGTQVELVIDWYNRYRLMRHHTATHIVLGAARKVLGEHVWQAGAEKTVEKARLDITHYKSLSDEEIRKIEELANKVIDERIDLKFYFLPKFEAEKRFGLRIYQGGAVYSPILRIVEIPGWDAEACFGTHVYNTSEIGGIKIIKAEKIQDGVIRLEYIASTRLPEYISDLQKEVDKALKFLGAKGLPISIVAKKVSEELDKYKTLLIQYRRLFKEILLKHLLEEALEICGLKTVVIEKQLEDEQLYKSIIEDLSLKKRVLTIYVSDKFVEIAIHPDEANNRKLDLRKLVEILQNMGGRGGGKPDHIYIKIKEPKQIVKLIVEAITNLLCKA.

Residues H600, H604, C704, and H708 each coordinate Zn(2+).

It belongs to the class-II aminoacyl-tRNA synthetase family. The cofactor is Zn(2+).

It is found in the cytoplasm. The catalysed reaction is tRNA(Ala) + L-alanine + ATP = L-alanyl-tRNA(Ala) + AMP + diphosphate. Functionally, catalyzes the attachment of alanine to tRNA(Ala) in a two-step reaction: alanine is first activated by ATP to form Ala-AMP and then transferred to the acceptor end of tRNA(Ala). Also edits incorrectly charged Ser-tRNA(Ala) and Gly-tRNA(Ala) via its editing domain. The protein is Alanine--tRNA ligase of Staphylothermus marinus (strain ATCC 43588 / DSM 3639 / JCM 9404 / F1).